A 97-amino-acid chain; its full sequence is Co-chaperonin GroES (97 aa).

It belongs to the GroES chaperonin family. Heptamer of 7 subunits arranged in a ring. Interacts with the chaperonin GroEL.

The protein resides in the cytoplasm. Together with the chaperonin GroEL, plays an essential role in assisting protein folding. The GroEL-GroES system forms a nano-cage that allows encapsulation of the non-native substrate proteins and provides a physical environment optimized to promote and accelerate protein folding. GroES binds to the apical surface of the GroEL ring, thereby capping the opening of the GroEL channel. The chain is Co-chaperonin GroES from Tolumonas auensis (strain DSM 9187 / NBRC 110442 / TA 4).